We begin with the raw amino-acid sequence, 283 residues long: Lectin subunit alpha (283 aa).

Positions 1–23 (MSLTMKNVEGFVIFLVIFTSTAA) are cleaved as a signal peptide. A C-type lectin domain is found at 51-159 (HECARHDQQL…NVKMGYICEP (109 aa)). Intrachain disulfides connect Cys53-Cys157 and Cys132-Cys149.

Its function is as follows. Role in the defense system of the organism against microorganisms. This lectin binds galactose. The polypeptide is Lectin subunit alpha (Sarcophaga peregrina (Flesh fly)).